Here is a 493-residue protein sequence, read N- to C-terminus: Ketol-acid reductoisomerase (NADP(+)) (493 aa).

One can recognise a KARI N-terminal Rossmann domain in the interval 14–208 (LDQLGRCRFM…GGHRAGVLES (195 aa)). Residues 45 to 48 (CGAQ), Arg-68, Arg-76, Ser-78, and 108 to 110 (DKQ) each bind NADP(+). His-132 is a catalytic residue. An NADP(+)-binding site is contributed by Gly-158. 2 KARI C-terminal knotted domains span residues 209 to 345 (SFVA…APKG) and 346 to 486 (ENIK…MTDM). Residues Asp-217, Glu-221, Glu-390, and Glu-394 each coordinate Mg(2+). Ser-415 is a binding site for substrate.

It belongs to the ketol-acid reductoisomerase family. Mg(2+) is required as a cofactor.

It carries out the reaction (2R)-2,3-dihydroxy-3-methylbutanoate + NADP(+) = (2S)-2-acetolactate + NADPH + H(+). The catalysed reaction is (2R,3R)-2,3-dihydroxy-3-methylpentanoate + NADP(+) = (S)-2-ethyl-2-hydroxy-3-oxobutanoate + NADPH + H(+). Its pathway is amino-acid biosynthesis; L-isoleucine biosynthesis; L-isoleucine from 2-oxobutanoate: step 2/4. It participates in amino-acid biosynthesis; L-valine biosynthesis; L-valine from pyruvate: step 2/4. Its function is as follows. Involved in the biosynthesis of branched-chain amino acids (BCAA). Catalyzes an alkyl-migration followed by a ketol-acid reduction of (S)-2-acetolactate (S2AL) to yield (R)-2,3-dihydroxy-isovalerate. In the isomerase reaction, S2AL is rearranged via a Mg-dependent methyl migration to produce 3-hydroxy-3-methyl-2-ketobutyrate (HMKB). In the reductase reaction, this 2-ketoacid undergoes a metal-dependent reduction by NADPH to yield (R)-2,3-dihydroxy-isovalerate. This Histophilus somni (strain 2336) (Haemophilus somnus) protein is Ketol-acid reductoisomerase (NADP(+)).